We begin with the raw amino-acid sequence, 381 residues long: Zinc finger CCCH domain-containing protein 61 (381 aa).

A disordered region spans residues 1–39 (MDVEHHKSGHISRPTVDIPPRKLLSSAKSPSSVSSPLRD). Residues 21-37 (RKLLSSAKSPSSVSSPL) are compositionally biased toward low complexity. C3H1-type zinc fingers lie at residues 101–128 (YTGE…HGVF) and 137–159 (YRTE…AHSP).

In terms of assembly, interacts with MARD1/FLZ9 and RD21A via its CCCH zing finger domains.

The protein resides in the cytoplasm. The protein localises to the stress granule. Its subcellular location is the P-body. This Arabidopsis thaliana (Mouse-ear cress) protein is Zinc finger CCCH domain-containing protein 61.